The sequence spans 340 residues: HTH-type transcriptional regulator CelR (340 aa).

Positions 1–61 constitute an HTH lacI-type domain; it reads MERRRRPTLE…PNRAARTLVT (61 aa). The segment at residues 9–28 is a DNA-binding region (H-T-H motif); sequence LEMVAALAGVGRGTVSRVIN.

The protein localises to the cytoplasm. With respect to regulation, activity is controlled by cytoplasmic cellobiose levels. Binding of CelR to the celE promoter is inhibited specifically by low concentrations of cellobiose, the major end product of cellulases. Activity may also be regulated through post-translational modification. Its function is as follows. Transcriptional regulator that regulates the expression of all six cellulases, encoded by the cel genes (designated celA through celF). Acts as a repressor. Specifically binds to a 14-bp inverted repeat site, which is present in the upstream region of the cellulase genes. This chain is HTH-type transcriptional regulator CelR, found in Thermobifida fusca (Thermomonospora fusca).